Here is a 384-residue protein sequence, read N- to C-terminus: S-adenosylmethionine synthase (384 aa).

His-15 contacts ATP. A Mg(2+)-binding site is contributed by Asp-17. Glu-43 is a K(+) binding site. L-methionine is bound by residues Glu-56 and Gln-99. The interval 99–109 is flexible loop; that stretch reads QSPDINQGVDR. Residues 164–166, 230–231, Asp-239, 245–246, Ala-262, and Lys-266 each bind ATP; these read DAK, RF, and RK. Asp-239 lines the L-methionine pocket. Lys-270 is a binding site for L-methionine.

The protein belongs to the AdoMet synthase family. As to quaternary structure, homotetramer; dimer of dimers. Requires Mg(2+) as cofactor. K(+) serves as cofactor.

It localises to the cytoplasm. It carries out the reaction L-methionine + ATP + H2O = S-adenosyl-L-methionine + phosphate + diphosphate. It participates in amino-acid biosynthesis; S-adenosyl-L-methionine biosynthesis; S-adenosyl-L-methionine from L-methionine: step 1/1. Its function is as follows. Catalyzes the formation of S-adenosylmethionine (AdoMet) from methionine and ATP. The overall synthetic reaction is composed of two sequential steps, AdoMet formation and the subsequent tripolyphosphate hydrolysis which occurs prior to release of AdoMet from the enzyme. The chain is S-adenosylmethionine synthase from Cronobacter sakazakii (strain ATCC BAA-894) (Enterobacter sakazakii).